A 350-amino-acid chain; its full sequence is Phosphate acyltransferase (350 aa).

The protein belongs to the PlsX family. Homodimer. Probably interacts with PlsY.

The protein resides in the cytoplasm. The enzyme catalyses a fatty acyl-[ACP] + phosphate = an acyl phosphate + holo-[ACP]. The protein operates within lipid metabolism; phospholipid metabolism. In terms of biological role, catalyzes the reversible formation of acyl-phosphate (acyl-PO(4)) from acyl-[acyl-carrier-protein] (acyl-ACP). This enzyme utilizes acyl-ACP as fatty acyl donor, but not acyl-CoA. The sequence is that of Phosphate acyltransferase from Phenylobacterium zucineum (strain HLK1).